The sequence spans 124 residues: MARILGIDIPNQKRIEIALTYIFGIGLSSAKTILKKAKINPDKRVKDLSEEELVAIRNAASGYKIEGDLRREIALNIKHLTEIGSWKGIRHRKNLPVRGQRTRTNARTRKGPRKTVANKKIESK.

The segment covering 93-117 has biased composition (basic residues); sequence KNLPVRGQRTRTNARTRKGPRKTVA. The tract at residues 93–124 is disordered; it reads KNLPVRGQRTRTNARTRKGPRKTVANKKIESK.

The protein belongs to the universal ribosomal protein uS13 family. As to quaternary structure, part of the 30S ribosomal subunit. Forms a loose heterodimer with protein S19. Forms two bridges to the 50S subunit in the 70S ribosome.

In terms of biological role, located at the top of the head of the 30S subunit, it contacts several helices of the 16S rRNA. In the 70S ribosome it contacts the 23S rRNA (bridge B1a) and protein L5 of the 50S subunit (bridge B1b), connecting the 2 subunits; these bridges are implicated in subunit movement. Contacts the tRNAs in the A and P-sites. The protein is Small ribosomal subunit protein uS13 of Mycoplasma genitalium (strain ATCC 33530 / DSM 19775 / NCTC 10195 / G37) (Mycoplasmoides genitalium).